The chain runs to 352 residues: Protein YpbB (352 aa).

Interacts with RecS and SSB (ssbA); the 6 C-terminal residues of SSB are required for interaction with YpbB.

The protein resides in the cytoplasm. It is found in the nucleoid. The chain is Protein YpbB (ypbB) from Bacillus subtilis (strain 168).